The chain runs to 196 residues: Ribosomal RNA large subunit methyltransferase E (196 aa).

Positions 52, 54, 72, 88, and 111 each coordinate S-adenosyl-L-methionine. Lysine 151 acts as the Proton acceptor in catalysis.

Belongs to the class I-like SAM-binding methyltransferase superfamily. RNA methyltransferase RlmE family.

The protein localises to the cytoplasm. The enzyme catalyses uridine(2552) in 23S rRNA + S-adenosyl-L-methionine = 2'-O-methyluridine(2552) in 23S rRNA + S-adenosyl-L-homocysteine + H(+). Its function is as follows. Specifically methylates the uridine in position 2552 of 23S rRNA at the 2'-O position of the ribose in the fully assembled 50S ribosomal subunit. This is Ribosomal RNA large subunit methyltransferase E from Cenarchaeum symbiosum (strain A).